Here is a 464-residue protein sequence, read N- to C-terminus: ATP synthase subunit beta (464 aa).

ATP is bound at residue 153 to 160; that stretch reads GGAGVGKT.

The protein belongs to the ATPase alpha/beta chains family. F-type ATPases have 2 components, CF(1) - the catalytic core - and CF(0) - the membrane proton channel. CF(1) has five subunits: alpha(3), beta(3), gamma(1), delta(1), epsilon(1). CF(0) has three main subunits: a(1), b(2) and c(9-12). The alpha and beta chains form an alternating ring which encloses part of the gamma chain. CF(1) is attached to CF(0) by a central stalk formed by the gamma and epsilon chains, while a peripheral stalk is formed by the delta and b chains.

The protein resides in the cell inner membrane. It catalyses the reaction ATP + H2O + 4 H(+)(in) = ADP + phosphate + 5 H(+)(out). Functionally, produces ATP from ADP in the presence of a proton gradient across the membrane. The catalytic sites are hosted primarily by the beta subunits. This chain is ATP synthase subunit beta, found in Burkholderia ambifaria (strain MC40-6).